The following is a 146-amino-acid chain: Hemoglobin subunit delta (146 aa).

In terms of domain architecture, Globin spans 2-146; it reads HLTGEEKSAV…VATALAHKYH (145 aa). Heme b is bound by residues His63 and His92.

The protein belongs to the globin family. As to quaternary structure, heterotetramer of two delta chains and two alpha chains. In terms of tissue distribution, red blood cells.

The chain is Hemoglobin subunit delta (HBD) from Ateles fusciceps (Brown-headed spider monkey).